The primary structure comprises 271 residues: MLKQRIITALVLLPIALGGFFLLEGAFFALFIGAVVSLGAWEWARLAGYEQQFGRVAYAATVAVLMVALYHLPQLAGAVLLLALVWWTLATVLVLTYPESVGYWGGRWRRLGMGLLILLPAWQGLVLLKQWPLANGLIIAVMVLVWGADIGAYFSGKAFGKRKLAPRVSPGKSWEGVYGGLAASLAITLAVGLYRGWSLGALLLALLGAALVVFVSIVGDLTESMFKRQSGIKDSSNLLPGHGGVLDRIDSLTAAIPVFAALLWAAGWGAP.

Helical transmembrane passes span 12–32 (LLPI…ALFI), 53–73 (FGRV…YHLP), 75–95 (LAGA…VLVL), 111–131 (LGMG…LKQW), 136–156 (GLII…YFSG), 174–194 (WEGV…VGLY), 199–219 (LGAL…SIVG), and 251–271 (SLTA…WGAP).

It belongs to the CDS family.

It localises to the cell inner membrane. The catalysed reaction is a 1,2-diacyl-sn-glycero-3-phosphate + CTP + H(+) = a CDP-1,2-diacyl-sn-glycerol + diphosphate. Its pathway is phospholipid metabolism; CDP-diacylglycerol biosynthesis; CDP-diacylglycerol from sn-glycerol 3-phosphate: step 3/3. This is Phosphatidate cytidylyltransferase (cdsA) from Pseudomonas aeruginosa (strain ATCC 15692 / DSM 22644 / CIP 104116 / JCM 14847 / LMG 12228 / 1C / PRS 101 / PAO1).